The sequence spans 77 residues: Small ribosomal subunit protein uS17 (77 aa).

Belongs to the universal ribosomal protein uS17 family. As to quaternary structure, part of the 30S ribosomal subunit.

Its function is as follows. One of the primary rRNA binding proteins, it binds specifically to the 5'-end of 16S ribosomal RNA. The protein is Small ribosomal subunit protein uS17 of Anaplasma marginale (strain St. Maries).